The following is an 858-amino-acid chain: Protein translocase subunit SecA (858 aa).

ATP contacts are provided by residues Gln-85, 103–107 (GEGKT), and Asp-511. Zn(2+) contacts are provided by Cys-840, Cys-842, Cys-851, and Cys-852.

This sequence belongs to the SecA family. Monomer and homodimer. Part of the essential Sec protein translocation apparatus which comprises SecA, SecYEG and auxiliary proteins SecDF. Other proteins may also be involved. Zn(2+) serves as cofactor.

It localises to the cell membrane. The protein localises to the cytoplasm. It carries out the reaction ATP + H2O + cellular proteinSide 1 = ADP + phosphate + cellular proteinSide 2.. Its function is as follows. Part of the Sec protein translocase complex. Interacts with the SecYEG preprotein conducting channel. Has a central role in coupling the hydrolysis of ATP to the transfer of proteins into and across the cell membrane, serving as an ATP-driven molecular motor driving the stepwise translocation of polypeptide chains across the membrane. In Lachnoclostridium phytofermentans (strain ATCC 700394 / DSM 18823 / ISDg) (Clostridium phytofermentans), this protein is Protein translocase subunit SecA.